The following is a 174-amino-acid chain: RNA pyrophosphohydrolase (174 aa).

Residues 6-149 (GFRANVGIII…KRDVYRKVMK (144 aa)) enclose the Nudix hydrolase domain. The Nudix box motif lies at 38–59 (GGVDDGESAEEAMYRELYEEVG).

It belongs to the Nudix hydrolase family. RppH subfamily. Requires a divalent metal cation as cofactor.

Its function is as follows. Accelerates the degradation of transcripts by removing pyrophosphate from the 5'-end of triphosphorylated RNA, leading to a more labile monophosphorylated state that can stimulate subsequent ribonuclease cleavage. This Shewanella sp. (strain ANA-3) protein is RNA pyrophosphohydrolase.